The sequence spans 396 residues: Elongation factor Tu (396 aa).

The region spanning 10–206 (KPHVNIGTIG…AVDAYIPEPE (197 aa)) is the tr-type G domain. The tract at residues 19 to 26 (GHVDHGKT) is G1. 19-26 (GHVDHGKT) contacts GTP. Residue Thr26 coordinates Mg(2+). Residues 60–64 (GITIA) are G2. Residues 81-84 (DCPG) form a G3 region. GTP is bound by residues 81–85 (DCPGH) and 136–139 (NKAD). The interval 136–139 (NKAD) is G4. The G5 stretch occupies residues 174–176 (SAL).

The protein belongs to the TRAFAC class translation factor GTPase superfamily. Classic translation factor GTPase family. EF-Tu/EF-1A subfamily. As to quaternary structure, monomer.

It is found in the cytoplasm. It catalyses the reaction GTP + H2O = GDP + phosphate + H(+). Its function is as follows. GTP hydrolase that promotes the GTP-dependent binding of aminoacyl-tRNA to the A-site of ribosomes during protein biosynthesis. The polypeptide is Elongation factor Tu (Geobacter metallireducens (strain ATCC 53774 / DSM 7210 / GS-15)).